Here is an 83-residue protein sequence, read N- to C-terminus: Apolipoprotein C-I (83 aa).

A signal peptide spans 1–26 (MRLFLSLPVLVVVLSIVLEGPAPAQG).

The protein belongs to the apolipoprotein C1 family. As to expression, synthesized mainly in liver and to a minor degree in intestine. Also found in the lung and spleen.

The protein localises to the secreted. Its function is as follows. Inhibitor of lipoprotein binding to the low density lipoprotein (LDL) receptor, LDL receptor-related protein, and very low density lipoprotein (VLDL) receptor. Associates with high density lipoproteins (HDL) and the triacylglycerol-rich lipoproteins in the plasma and makes up about 10% of the protein of the VLDL and 2% of that of HDL. Appears to interfere directly with fatty acid uptake and is also the major plasma inhibitor of cholesteryl ester transfer protein (CETP). Binds free fatty acids and reduces their intracellular esterification. Modulates the interaction of APOE with beta-migrating VLDL and inhibits binding of beta-VLDL to the LDL receptor-related protein. This Homo sapiens (Human) protein is Apolipoprotein C-I (APOC1).